The chain runs to 647 residues: Threonine--tRNA ligase (647 aa).

The region spanning Met1 to Thr61 is the TGS domain. A catalytic region spans residues Asp240 to Pro538. 3 residues coordinate Zn(2+): Cys334, His385, and His515.

It belongs to the class-II aminoacyl-tRNA synthetase family. As to quaternary structure, homodimer. Zn(2+) serves as cofactor.

It localises to the cytoplasm. It catalyses the reaction tRNA(Thr) + L-threonine + ATP = L-threonyl-tRNA(Thr) + AMP + diphosphate + H(+). In terms of biological role, catalyzes the attachment of threonine to tRNA(Thr) in a two-step reaction: L-threonine is first activated by ATP to form Thr-AMP and then transferred to the acceptor end of tRNA(Thr). Also edits incorrectly charged L-seryl-tRNA(Thr). The sequence is that of Threonine--tRNA ligase from Streptococcus pyogenes serotype M3 (strain ATCC BAA-595 / MGAS315).